The primary structure comprises 428 residues: 3-phosphoshikimate 1-carboxyvinyltransferase (428 aa).

3-phosphoshikimate is bound by residues Lys-19, Ser-20, and Arg-24. Phosphoenolpyruvate is bound at residue Lys-19. Phosphoenolpyruvate-binding residues include Gly-91 and Arg-119. Positions 164, 166, 312, and 339 each coordinate 3-phosphoshikimate. Residue Gln-166 participates in phosphoenolpyruvate binding. Residue Asp-312 is the Proton acceptor of the active site. Residues Arg-343 and Arg-386 each coordinate phosphoenolpyruvate.

Belongs to the EPSP synthase family. Monomer.

It localises to the cytoplasm. The catalysed reaction is 3-phosphoshikimate + phosphoenolpyruvate = 5-O-(1-carboxyvinyl)-3-phosphoshikimate + phosphate. It participates in metabolic intermediate biosynthesis; chorismate biosynthesis; chorismate from D-erythrose 4-phosphate and phosphoenolpyruvate: step 6/7. Functionally, catalyzes the transfer of the enolpyruvyl moiety of phosphoenolpyruvate (PEP) to the 5-hydroxyl of shikimate-3-phosphate (S3P) to produce enolpyruvyl shikimate-3-phosphate and inorganic phosphate. The sequence is that of 3-phosphoshikimate 1-carboxyvinyltransferase from Bacillus velezensis (strain DSM 23117 / BGSC 10A6 / LMG 26770 / FZB42) (Bacillus amyloliquefaciens subsp. plantarum).